The chain runs to 919 residues: MLX-interacting protein (919 aa).

The tract at residues 1–72 (MAADVFMCSP…AGPGREEPPR (72 aa)) is disordered. At Ala2 the chain carries N-acetylalanine. Ser9, Ser27, Ser33, and Ser39 each carry phosphoserine. Over residues 27–37 (SEDDDDSDTDE) the composition is skewed to acidic residues. Residues 44 to 56 (SGAATPARAHASA) are compositionally biased toward low complexity. A required for cytoplasmic localization region spans residues 73–327 (RQQIIHSGHF…PLQPNLDFMD (255 aa)). The segment at 322–445 (NLDFMDTFEP…LLSPSPAPPP (124 aa)) is transactivation domain. Disordered stretches follow at residues 542–562 (KPVS…PAPK) and 633–712 (DLGH…SDPK). Phosphoserine is present on Ser669. Polar residues predominate over residues 670-685 (PQVTVTGPSRDCPNSG). Positions 686–706 (QASPCASEQSPSPQSPQNNCS) are enriched in low complexity. A bHLH domain is found at 719 to 769 (NRQMKHISAEQKRRFNIKMCFDMLNSLISNNSKLTSHAITLQKTVEYITKL). The tract at residues 769–790 (LQQERGQMQEEARRLREEIEEL) is leucine-zipper. The tract at residues 832 to 881 (WKFWIFSIIIKPLFESFKGMVSTSSLEELHRTALSWLDQHCSLPILRPMV) is mediates heterotypic interactions between MLXIP and MLX and is required for cytoplasmic localization.

In terms of assembly, efficient DNA binding requires dimerization with another bHLH protein. Binds DNA as a homodimer or a heterodimer with MLX. In terms of tissue distribution, widely expressed in adult tissues. Most abundant in skeletal muscle.

The protein localises to the cytoplasm. It is found in the nucleus. It localises to the mitochondrion outer membrane. Functionally, binds DNA as a heterodimer with MLX and activates transcription. Binds to the canonical E box sequence 5'-CACGTG-3'. Plays a role in transcriptional activation of glycolytic target genes. Involved in glucose-responsive gene regulation. The sequence is that of MLX-interacting protein from Homo sapiens (Human).